The chain runs to 383 residues: Chorismate synthase (383 aa).

Arg48 is an NADP(+) binding site. FMN-binding positions include 125-127, Gly286, 301-305, and Arg328; these read RSS and HAPTS. The interval 361-383 is disordered; the sequence is PDRLDDNPGQYETEYHPSSPQTN.

Belongs to the chorismate synthase family. The cofactor is FMNH2.

The catalysed reaction is 5-O-(1-carboxyvinyl)-3-phosphoshikimate = chorismate + phosphate. The protein operates within metabolic intermediate biosynthesis; chorismate biosynthesis; chorismate from D-erythrose 4-phosphate and phosphoenolpyruvate: step 7/7. In terms of biological role, catalyzes the anti-1,4-elimination of the C-3 phosphate and the C-6 proR hydrogen from 5-enolpyruvylshikimate-3-phosphate (EPSP) to yield chorismate, which is the branch point compound that serves as the starting substrate for the three terminal pathways of aromatic amino acid biosynthesis. This reaction introduces a second double bond into the aromatic ring system. The polypeptide is Chorismate synthase (Haloquadratum walsbyi (strain DSM 16790 / HBSQ001)).